The chain runs to 84 residues: Small ribosomal subunit protein uS17 (84 aa).

The protein belongs to the universal ribosomal protein uS17 family. As to quaternary structure, part of the 30S ribosomal subunit.

Its function is as follows. One of the primary rRNA binding proteins, it binds specifically to the 5'-end of 16S ribosomal RNA. This chain is Small ribosomal subunit protein uS17, found in Serratia proteamaculans (strain 568).